Here is a 278-residue protein sequence, read N- to C-terminus: Ribosomal protein L11 methyltransferase (278 aa).

The S-adenosyl-L-methionine site is built by Thr131, Gly152, Asp173, and Asn214.

Belongs to the methyltransferase superfamily. PrmA family.

It is found in the cytoplasm. The enzyme catalyses L-lysyl-[protein] + 3 S-adenosyl-L-methionine = N(6),N(6),N(6)-trimethyl-L-lysyl-[protein] + 3 S-adenosyl-L-homocysteine + 3 H(+). Methylates ribosomal protein L11. The polypeptide is Ribosomal protein L11 methyltransferase (Campylobacter lari (strain RM2100 / D67 / ATCC BAA-1060)).